The primary structure comprises 364 residues: UDP-N-acetylglucosamine--N-acetylmuramyl-(pentapeptide) pyrophosphoryl-undecaprenol N-acetylglucosamine transferase (364 aa).

UDP-N-acetyl-alpha-D-glucosamine is bound by residues 10-12, Asn-124, Arg-166, Ser-196, and Gln-297; that span reads TGG.

This sequence belongs to the glycosyltransferase 28 family. MurG subfamily.

The protein localises to the cell membrane. The catalysed reaction is di-trans,octa-cis-undecaprenyl diphospho-N-acetyl-alpha-D-muramoyl-L-alanyl-D-glutamyl-meso-2,6-diaminopimeloyl-D-alanyl-D-alanine + UDP-N-acetyl-alpha-D-glucosamine = di-trans,octa-cis-undecaprenyl diphospho-[N-acetyl-alpha-D-glucosaminyl-(1-&gt;4)]-N-acetyl-alpha-D-muramoyl-L-alanyl-D-glutamyl-meso-2,6-diaminopimeloyl-D-alanyl-D-alanine + UDP + H(+). Its pathway is cell wall biogenesis; peptidoglycan biosynthesis. Its function is as follows. Cell wall formation. Catalyzes the transfer of a GlcNAc subunit on undecaprenyl-pyrophosphoryl-MurNAc-pentapeptide (lipid intermediate I) to form undecaprenyl-pyrophosphoryl-MurNAc-(pentapeptide)GlcNAc (lipid intermediate II). The polypeptide is UDP-N-acetylglucosamine--N-acetylmuramyl-(pentapeptide) pyrophosphoryl-undecaprenol N-acetylglucosamine transferase (Thermoanaerobacter pseudethanolicus (strain ATCC 33223 / 39E) (Clostridium thermohydrosulfuricum)).